A 451-amino-acid polypeptide reads, in one-letter code: Bifunctional protein GlmU (451 aa).

Residues 1 to 225 (MVVVAILAAG…YQEILGINDR (225 aa)) are pyrophosphorylase. Residues 7–10 (LAAG), Lys21, Gln72, and 77–78 (GT) each bind UDP-N-acetyl-alpha-D-glucosamine. Asp102 is a binding site for Mg(2+). The UDP-N-acetyl-alpha-D-glucosamine site is built by Gly139, Glu154, Asn169, and Asn223. Mg(2+) is bound at residue Asn223. The tract at residues 226-246 (LQLATAYEILQRRVKEQWMMA) is linker. An N-acetyltransferase region spans residues 247-451 (GVTLIDPNSI…LGWRRKSGES (205 aa)). 2 residues coordinate UDP-N-acetyl-alpha-D-glucosamine: Arg328 and Lys346. His358 (proton acceptor) is an active-site residue. Residues Tyr361 and Asn372 each coordinate UDP-N-acetyl-alpha-D-glucosamine. Residues Ala375, 381–382 (NY), Ser400, Ala418, and Arg435 each bind acetyl-CoA.

It in the N-terminal section; belongs to the N-acetylglucosamine-1-phosphate uridyltransferase family. This sequence in the C-terminal section; belongs to the transferase hexapeptide repeat family. As to quaternary structure, homotrimer. Requires Mg(2+) as cofactor.

The protein resides in the cytoplasm. The enzyme catalyses alpha-D-glucosamine 1-phosphate + acetyl-CoA = N-acetyl-alpha-D-glucosamine 1-phosphate + CoA + H(+). It carries out the reaction N-acetyl-alpha-D-glucosamine 1-phosphate + UTP + H(+) = UDP-N-acetyl-alpha-D-glucosamine + diphosphate. The protein operates within nucleotide-sugar biosynthesis; UDP-N-acetyl-alpha-D-glucosamine biosynthesis; N-acetyl-alpha-D-glucosamine 1-phosphate from alpha-D-glucosamine 6-phosphate (route II): step 2/2. It participates in nucleotide-sugar biosynthesis; UDP-N-acetyl-alpha-D-glucosamine biosynthesis; UDP-N-acetyl-alpha-D-glucosamine from N-acetyl-alpha-D-glucosamine 1-phosphate: step 1/1. Its pathway is bacterial outer membrane biogenesis; LPS lipid A biosynthesis. Functionally, catalyzes the last two sequential reactions in the de novo biosynthetic pathway for UDP-N-acetylglucosamine (UDP-GlcNAc). The C-terminal domain catalyzes the transfer of acetyl group from acetyl coenzyme A to glucosamine-1-phosphate (GlcN-1-P) to produce N-acetylglucosamine-1-phosphate (GlcNAc-1-P), which is converted into UDP-GlcNAc by the transfer of uridine 5-monophosphate (from uridine 5-triphosphate), a reaction catalyzed by the N-terminal domain. The polypeptide is Bifunctional protein GlmU (Nostoc sp. (strain PCC 7120 / SAG 25.82 / UTEX 2576)).